Consider the following 323-residue polypeptide: uncharacterized protein (323 aa).

Positions 1–142 constitute a TIR domain; it reads MPSVFFSYSH…QVAKAVREAA (142 aa).

This is an uncharacterized protein from Sinorhizobium fredii (strain NBRC 101917 / NGR234).